We begin with the raw amino-acid sequence, 502 residues long: Cardiolipin synthase (502 aa).

A run of 3 helical transmembrane segments spans residues 7-27, 29-49, and 59-79; these read VIIF…YWEG, LLGG…FVIS, and ITWL…YLMF. PLD phosphodiesterase domains lie at 237-264 and 415-442; these read INFR…GDEY and SKGF…DMRS. Active-site residues include His242, Lys244, Asp249, His420, Lys422, and Asp427.

It belongs to the phospholipase D family. Cardiolipin synthase subfamily.

The protein localises to the cell membrane. The catalysed reaction is 2 a 1,2-diacyl-sn-glycero-3-phospho-(1'-sn-glycerol) = a cardiolipin + glycerol. Catalyzes the reversible phosphatidyl group transfer from one phosphatidylglycerol molecule to another to form cardiolipin (CL) (diphosphatidylglycerol) and glycerol. The chain is Cardiolipin synthase (cls) from Geobacillus sp. (strain WCH70).